The following is a 284-amino-acid chain: Bifunctional protein FolD (284 aa).

Residues 166–168 (GAS) and Ile232 each bind NADP(+).

It belongs to the tetrahydrofolate dehydrogenase/cyclohydrolase family. Homodimer.

The enzyme catalyses (6R)-5,10-methylene-5,6,7,8-tetrahydrofolate + NADP(+) = (6R)-5,10-methenyltetrahydrofolate + NADPH. The catalysed reaction is (6R)-5,10-methenyltetrahydrofolate + H2O = (6R)-10-formyltetrahydrofolate + H(+). Its pathway is one-carbon metabolism; tetrahydrofolate interconversion. Its function is as follows. Catalyzes the oxidation of 5,10-methylenetetrahydrofolate to 5,10-methenyltetrahydrofolate and then the hydrolysis of 5,10-methenyltetrahydrofolate to 10-formyltetrahydrofolate. This Pseudomonas putida (strain W619) protein is Bifunctional protein FolD.